The chain runs to 348 residues: Trans-L-3-hydroxyproline dehydratase (348 aa).

The active-site Proton acceptor is C101. Substrate is bound by residues 102–103, D263, and 268–269; these read GH and GS.

This sequence belongs to the proline racemase family. As to quaternary structure, homodimer.

The enzyme catalyses trans-3-hydroxy-L-proline = 1-pyrroline-2-carboxylate + H2O. Catalyzes the dehydration of trans-3-hydroxy-L-proline to delta-1-pyrroline-2-carboxylate (Pyr2C). In Xenopus tropicalis (Western clawed frog), this protein is Trans-L-3-hydroxyproline dehydratase (l3hypdh).